The chain runs to 303 residues: MADAASQVLLGSGLTILSQPLMYVKVLIQVGYEPLAPTVGRNIFGRQVCQLPGLFCYAQHIASIDGKRGLFTGLTPRLCSGVLGTVVHGKVLQHYQECDKAEESGSGNVQKEVSSSFDRVIKETTREMMARSAATLITHPFHVITLRSMVQFIGRESKYCGLCDSIATIYREEGILGFFAGLIPRLLGDIISLWLCNSLAYLVNTYALDSGVSTMNEMKSYSQAVTGFFASMLTYPFVLVSNLMAVNNCGLAGGCPPYAPIYSSWIDCWCMLQKEGNMSRGNSLFFRKVPFGKTYCCDLRMLI.

Ala-2 is modified (N-acetylalanine). The Mitochondrial intermembrane segment spans residues Ala-2–Thr-15. Solcar repeat units follow at residues Ala-2 to Cys-98 and Asp-118 to Tyr-206. Residues Ile-16–Ala-36 traverse the membrane as a helical segment. The Cytoplasmic portion of the chain corresponds to Pro-37–Arg-77. A helical membrane pass occupies residues Leu-78–Leu-92. Residues Gln-93–Thr-135 lie on the Mitochondrial intermembrane side of the membrane. A helical transmembrane segment spans residues Leu-136–Glu-156. At Ser-157–Ala-180 the chain is on the cytoplasmic side. The helical transmembrane segment at Gly-181–Leu-199 threads the bilayer. Residues Ala-200 to Ser-231 lie on the Mitochondrial intermembrane side of the membrane. Residues Met-232–Ala-252 form a helical membrane-spanning segment. The Cytoplasmic portion of the chain corresponds to Gly-253–Arg-280. A helical membrane pass occupies residues Gly-281–Ile-303.

The protein belongs to the mitochondrial carrier (TC 2.A.29) family. As to quaternary structure, interacts with p15BID.

It is found in the mitochondrion outer membrane. Protein insertase that mediates insertion of transmembrane proteins into the mitochondrial outer membrane. Catalyzes insertion of proteins with alpha-helical transmembrane regions, such as signal-anchored, tail-anchored and multi-pass membrane proteins. Does not mediate insertion of beta-barrel transmembrane proteins. Also acts as a receptor for the truncated form of pro-apoptotic BH3-interacting domain death agonist (p15 BID) and has therefore a critical function in apoptosis. Regulates the quiescence/cycling of hematopoietic stem cells (HSCs). Acts as a regulator of mitochondrial fusion, essential for the naive-to-primed interconversion of embryonic stem cells (ESCs). Acts as a regulator of lipid homeostasis and has a regulatory role in adipocyte differentiation and biology. This Bos taurus (Bovine) protein is Mitochondrial carrier homolog 2 (MTCH2).